The chain runs to 121 residues: MAGHRMARMAEEIKRELARLLRDEMKDPRLGFVSITAVEVSGDGRHAKVYVSVMGDESARDNSQAALKQATGFLRTELSKSLRVRYVPELVFLSDLSIERGTRIARLLTEMENHDDAEAPR.

It belongs to the RbfA family. In terms of assembly, monomer. Binds 30S ribosomal subunits, but not 50S ribosomal subunits or 70S ribosomes.

Its subcellular location is the cytoplasm. Its function is as follows. One of several proteins that assist in the late maturation steps of the functional core of the 30S ribosomal subunit. Associates with free 30S ribosomal subunits (but not with 30S subunits that are part of 70S ribosomes or polysomes). Required for efficient processing of 16S rRNA. May interact with the 5'-terminal helix region of 16S rRNA. The polypeptide is Ribosome-binding factor A (Heliobacterium modesticaldum (strain ATCC 51547 / Ice1)).